The primary structure comprises 1378 residues: MVKNQIFSLKSLWSSSIFKILYCYLFTSLLLILSTWVSVNDGLSVREHIILLRLYFDTNGTTWYHNQGWKEYADCILAADGSVRKALESIDPLTGQIPQYLWADHFSQLDNNKTLYKIIHNQIQGHKVVICNAFGITCEDRINLTGIDLSNNNLKGNITPYLPYLLHLRNLNLSNNHLSGCFPDGLLKAQSLVALDLSYNNISCTLSLADSKAISYIDISHNHLTGYFKNVWKTPNLLFLDLSFNKLYGTILKEFFRQKSLDYVNLSSNQLIGFLPILSKSRISYLNISNNRLIGNITLLTCWKAGSLRIFDAENNMFEGALPESIFDHSPLQYVNLKGNIVKDPLPSILDCAKSEVKIIVPDGLKQNKCDPKVSSNWVLILNPLGEEFNIVGSDFGINSKSINIQFQNGLHCVDNVTTIIKSNTIISCKNPQGRNSTYLKLTIPTGEPGNFTVIKQQLYYYRPIIKSCSKVYKNIGGEITILGSHLESFNKTSNGKKMITVSIGNIKNSFTNVTSSINSDGFSGEVISCRNADIITPDMITCSIPSNTNLQQPAEIQIIIDGITAYVPIDSTRPHFLYKGVYNKDITISKPTEYNQTITISVPNETIIDMDQVVRVLIDDNDDSICKNIQHINKTSIQCLPYSETCGSNVKVTLVTKYGEPQFTTSLNYPPPIITRVTQGIDSTSNSIITINGKFLKTGGKRNLSIKINDTICCPLYNEYYYKQDELDDDNNNNNNNNNNSTTDINNNNNIIKNNNLIKEEQILCYYQINQSLPIHLNLPVTLTLSNQTVVKNNIYSQTNSTCPNNCVKHRTNGCRSGICECYPNLTGPSCDENIPESTISNFSNYLPDFILSFPKFITNNTFNIKFLSISEVNESGNIVDRFCSLNNNNNNNNNNNNKNNNNNNNDSNNEKEVVEDEEEDLDYSSQNDNNNINNNNNENNNENKLNWKLINQTKTTNALYTLKIKKKNVTLDILISSDNNQHREVYFAGEVIQVPKSSIELIVNLKGKWLFKDPKNQLKFNFLVKPVNDHDYSLCLPSPFVLISDEPFRWITMDVDSSTIFAKPSNRFLLNNYLVRVIEPNYKLSDSNLTLNLYYQFNQTTLKQQDNHGDDNSDNSIKYTEDSLKFRIDFSTFNSRREINPKPRGCFKDNTHKFPYDYYIVFFGCASGLILVLVICIVQCSRIESRQRKQIIKSFKATQKMPVEIKTPLLPPSFHFNFLDYNNMDLNNNNNNNNNNNNNNNNNNNNNNNNNNNNNNNNNFNDGSDTFNNNNKKNLNYEDNCDTVGFDGKENDIKNINNKKDEKEDDGDDDDDEDDDEYEDDTQPCSSGNSSRSKGSDGGSSSNSLSSDKQSFNNGNENNSIIPENKKKHLTIINKK.

Residues 17 to 37 (IFKILYCYLFTSLLLILSTWV) form a helical membrane-spanning segment. 5 N-linked (GlcNAc...) asparagine glycosylation sites follow: asparagine 59, asparagine 112, asparagine 143, asparagine 172, and asparagine 201. LRR repeat units lie at residues 143–165 (NLTG…LPYL), 167–188 (HLRN…GLLK), 191–212 (SLVA…ADSK), 213–235 (AISY…WKTP), 236–257 (NLLF…EFFR), 260–281 (SLDY…LSKS), 282–304 (RISY…TCWK), 307–329 (SLRI…IFDH), and 331–353 (PLQY…LDCA). Asparagine 265, asparagine 287, and asparagine 296 each carry an N-linked (GlcNAc...) asparagine glycan. N-linked (GlcNAc...) asparagine glycosylation is found at asparagine 416, asparagine 436, asparagine 451, asparagine 491, asparagine 513, asparagine 596, asparagine 605, asparagine 634, asparagine 704, asparagine 710, asparagine 740, asparagine 741, asparagine 771, asparagine 788, asparagine 801, asparagine 826, asparagine 843, asparagine 861, asparagine 875, and asparagine 907. The stretch at 886-946 (SLNNNNNNNN…NNNENNNENK (61 aa)) forms a coiled coil. Residues 891–909 (NNNNNNNNNKNNNNNNNDS) show a composition bias toward low complexity. Positions 891–945 (NNNNNNNNNKNNNNNNNDSNNEKEVVEDEEEDLDYSSQNDNNNINNNNNENNNEN) are disordered. A compositionally biased stretch (acidic residues) spans 915-924 (VVEDEEEDLD). Residues 929 to 945 (NDNNNINNNNNENNNEN) show a composition bias toward low complexity. N-linked (GlcNAc...) asparagine glycosylation is found at asparagine 953, asparagine 970, asparagine 1090, and asparagine 1100. The chain crosses the membrane as a helical span at residues 1160-1180 (YYIVFFGCASGLILVLVICIV). Residues 1227-1276 (DLNNNNNNNNNNNNNNNNNNNNNNNNNNNNNNNNNFNDGSDTFNNNNKKN) are compositionally biased toward low complexity. A disordered region spans residues 1227-1378 (DLNNNNNNNN…KKHLTIINKK (152 aa)). Residues 1289 to 1304 (DGKENDIKNINNKKDE) show a composition bias toward basic and acidic residues. The segment covering 1305–1324 (KEDDGDDDDDEDDDEYEDDT) has biased composition (acidic residues). Low complexity predominate over residues 1328 to 1353 (SSGNSSRSKGSDGGSSSNSLSSDKQS). 2 N-linked (GlcNAc...) asparagine glycosylation sites follow: asparagine 1331 and asparagine 1360. Polar residues predominate over residues 1354-1364 (FNNGNENNSII). Over residues 1368 to 1378 (KKKHLTIINKK) the composition is skewed to basic residues.

It is found in the membrane. The chain is S-cell enriched with leucine-rich repeat-containing protein slrA (slrA) from Dictyostelium discoideum (Social amoeba).